The following is a 940-amino-acid chain: UvrABC system protein A (940 aa).

Residue 31-38 (GLSGSGKS) participates in ATP binding. The segment at 252–279 (CPHCGYSMRELEPRLFSFNNPAGACPTC) adopts a C4-type zinc-finger fold. 2 consecutive ABC transporter domains span residues 309 to 586 (WDQK…PNSL) and 606 to 936 (KDAK…RFLK). 639–646 (GVSGSGKS) provides a ligand contact to ATP. The segment at 739–765 (CEACQGDGVIKVEMHFLPDVYVPCDVC) adopts a C4-type zinc-finger fold.

This sequence belongs to the ABC transporter superfamily. UvrA family. Forms a heterotetramer with UvrB during the search for lesions.

Its subcellular location is the cytoplasm. In terms of biological role, the UvrABC repair system catalyzes the recognition and processing of DNA lesions. UvrA is an ATPase and a DNA-binding protein. A damage recognition complex composed of 2 UvrA and 2 UvrB subunits scans DNA for abnormalities. When the presence of a lesion has been verified by UvrB, the UvrA molecules dissociate. The chain is UvrABC system protein A from Vibrio cholerae serotype O1 (strain ATCC 39315 / El Tor Inaba N16961).